The following is a 333-amino-acid chain: Casein kinase II subunit alpha-2 (333 aa).

Positions 34-319 constitute a Protein kinase domain; that stretch reads YEVVRKVGRG…AREAMAHPYF (286 aa). ATP is bound by residues 40–48 and Lys63; that span reads VGRGKYSEV. Asp151 acts as the Proton acceptor in catalysis.

Belongs to the protein kinase superfamily. Ser/Thr protein kinase family. CK2 subfamily. As to quaternary structure, monomer. Autophosphorylated.

It localises to the cytoplasm. The enzyme catalyses L-seryl-[protein] + ATP = O-phospho-L-seryl-[protein] + ADP + H(+). It carries out the reaction L-threonyl-[protein] + ATP = O-phospho-L-threonyl-[protein] + ADP + H(+). Functionally, casein kinases are operationally defined by their preferential utilization of acidic proteins such as caseins as substrates. It can phosphorylate a large number of proteins. Involved in photoperiod sensitivity (PS). Increases days-to-heading under natural day (ND) and long day (LD) conditions, but not under short day (SD) conditions. The polypeptide is Casein kinase II subunit alpha-2 (Oryza sativa subsp. indica (Rice)).